Consider the following 541-residue polypeptide: uncharacterized protein (541 aa).

Transmembrane regions (helical) follow at residues 57 to 77 (LVVTANLLGIGVALLLVTIAI), 90 to 110 (LTFGVVPGYVLLALALGSYAL), 144 to 164 (VGHLMFWGVGTALLTTLYGLI), 167 to 187 (AFIPRFLFAVSFCGVLVATAT), 221 to 241 (MVVWLLGSGVPVVGIALMAMF), and 257 to 277 (VLIISMVTLVFGFILMWILAW). Positions 278-329 (LTATPVRVVRAALRRVERGELRTNLVVFDGTELGELQRGFNAMVAGLRERER) constitute an HAMP domain. The Guanylate cyclase domain maps to 361-485 (AVVFIDIVGS…EPVNEAARLC (125 aa)).

The protein belongs to the adenylyl cyclase class-3 family.

The protein resides in the cell membrane. This is an uncharacterized protein from Mycobacterium tuberculosis (strain CDC 1551 / Oshkosh).